The following is a 758-amino-acid chain: 52 kDa repressor of the inhibitor of the protein kinase (758 aa).

The THAP-type zinc finger occupies 1–86 (MPNFCAAPNC…LRDNAIPTIF (86 aa)). The tract at residues 116–141 (QKKIEETSEQEQETNTNAQNPSAEAV) is disordered. Ser563 is subject to Phosphoserine.

As to quaternary structure, interacts with DNAJC3, probably sequestring it.

Its function is as follows. Upstream regulator of interferon-induced serine/threonine protein kinase R (PKR). May block the PKR-inhibitory function of DNAJC3, resulting in restoration of kinase activity and suppression of cell growth. This Mus musculus (Mouse) protein is 52 kDa repressor of the inhibitor of the protein kinase.